Consider the following 111-residue polypeptide: Large ribosomal subunit protein uL22 (111 aa).

Belongs to the universal ribosomal protein uL22 family. In terms of assembly, part of the 50S ribosomal subunit.

In terms of biological role, this protein binds specifically to 23S rRNA; its binding is stimulated by other ribosomal proteins, e.g. L4, L17, and L20. It is important during the early stages of 50S assembly. It makes multiple contacts with different domains of the 23S rRNA in the assembled 50S subunit and ribosome. The globular domain of the protein is located near the polypeptide exit tunnel on the outside of the subunit, while an extended beta-hairpin is found that lines the wall of the exit tunnel in the center of the 70S ribosome. In Geotalea uraniireducens (strain Rf4) (Geobacter uraniireducens), this protein is Large ribosomal subunit protein uL22.